The following is a 655-amino-acid chain: Fructose-1,6-bisphosphatase class 3 (655 aa).

It belongs to the FBPase class 3 family. It depends on Mn(2+) as a cofactor.

The catalysed reaction is beta-D-fructose 1,6-bisphosphate + H2O = beta-D-fructose 6-phosphate + phosphate. The protein operates within carbohydrate biosynthesis; gluconeogenesis. In Porphyromonas gingivalis (strain ATCC 33277 / DSM 20709 / CIP 103683 / JCM 12257 / NCTC 11834 / 2561), this protein is Fructose-1,6-bisphosphatase class 3.